Here is a 474-residue protein sequence, read N- to C-terminus: Glutamate--tRNA ligase (474 aa).

Positions 9 to 19 (PSPTGYLHVGG) match the 'HIGH' region motif. Positions 240-244 (KLSKR) match the 'KMSKS' region motif. K243 is a binding site for ATP.

This sequence belongs to the class-I aminoacyl-tRNA synthetase family. Glutamate--tRNA ligase type 1 subfamily. Monomer.

The protein resides in the cytoplasm. The catalysed reaction is tRNA(Glu) + L-glutamate + ATP = L-glutamyl-tRNA(Glu) + AMP + diphosphate. Its function is as follows. Catalyzes the attachment of glutamate to tRNA(Glu) in a two-step reaction: glutamate is first activated by ATP to form Glu-AMP and then transferred to the acceptor end of tRNA(Glu). The protein is Glutamate--tRNA ligase of Vibrio cholerae serotype O1 (strain ATCC 39315 / El Tor Inaba N16961).